Consider the following 475-residue polypeptide: Ribulose bisphosphate carboxylase large chain (475 aa).

The propeptide occupies methionine 1–serine 2. Proline 3 is subject to N-acetylproline. Lysine 14 carries the post-translational modification N6,N6,N6-trimethyllysine. Substrate-binding residues include asparagine 123 and threonine 173. Residue lysine 175 is the Proton acceptor of the active site. Lysine 177 lines the substrate pocket. Residues lysine 201, aspartate 203, and glutamate 204 each coordinate Mg(2+). Lysine 201 bears the N6-carboxylysine mark. The active-site Proton acceptor is the histidine 294. Substrate is bound by residues arginine 295, histidine 327, and serine 379.

It belongs to the RuBisCO large chain family. Type I subfamily. As to quaternary structure, heterohexadecamer of 8 large chains and 8 small chains; disulfide-linked. The disulfide link is formed within the large subunit homodimers. Requires Mg(2+) as cofactor. In terms of processing, the disulfide bond which can form in the large chain dimeric partners within the hexadecamer appears to be associated with oxidative stress and protein turnover.

It is found in the plastid. The protein resides in the chloroplast. It catalyses the reaction 2 (2R)-3-phosphoglycerate + 2 H(+) = D-ribulose 1,5-bisphosphate + CO2 + H2O. The catalysed reaction is D-ribulose 1,5-bisphosphate + O2 = 2-phosphoglycolate + (2R)-3-phosphoglycerate + 2 H(+). Its function is as follows. RuBisCO catalyzes two reactions: the carboxylation of D-ribulose 1,5-bisphosphate, the primary event in carbon dioxide fixation, as well as the oxidative fragmentation of the pentose substrate in the photorespiration process. Both reactions occur simultaneously and in competition at the same active site. The polypeptide is Ribulose bisphosphate carboxylase large chain (Citrus sinensis (Sweet orange)).